A 173-amino-acid chain; its full sequence is Co-chaperone protein HscB homolog (173 aa).

One can recognise a J domain in the interval 5 to 77 (CHFALFDLQP…PRRARYLLAI (73 aa)).

The protein belongs to the HscB family. Interacts with HscA and stimulates its ATPase activity.

Functionally, co-chaperone involved in the maturation of iron-sulfur cluster-containing proteins. Seems to help targeting proteins to be folded toward HscA. This Pseudomonas putida (strain W619) protein is Co-chaperone protein HscB homolog.